Here is a 665-residue protein sequence, read N- to C-terminus: Transketolase (665 aa).

H26 is a substrate binding site. Residues H66 and 114–116 (GPL) contribute to the thiamine diphosphate site. Residues 94-114 (NSKTPGHPETGETPGVETTTG) are disordered. Residues 97-114 (TPGHPETGETPGVETTTG) are compositionally biased toward low complexity. D155 contacts Mg(2+). Thiamine diphosphate is bound by residues G156 and N185. Mg(2+) is bound by residues N185 and I187. H261, R358, and S385 together coordinate substrate. A thiamine diphosphate-binding site is contributed by H261. E411 acts as the Proton donor in catalysis. F437 contributes to the thiamine diphosphate binding site. Substrate contacts are provided by H461, D469, and R520.

This sequence belongs to the transketolase family. Homodimer. The cofactor is Mg(2+). Ca(2+) serves as cofactor. Requires Mn(2+) as cofactor. It depends on Co(2+) as a cofactor. Thiamine diphosphate is required as a cofactor.

The catalysed reaction is D-sedoheptulose 7-phosphate + D-glyceraldehyde 3-phosphate = aldehydo-D-ribose 5-phosphate + D-xylulose 5-phosphate. Catalyzes the transfer of a two-carbon ketol group from a ketose donor to an aldose acceptor, via a covalent intermediate with the cofactor thiamine pyrophosphate. This Buchnera aphidicola subsp. Acyrthosiphon pisum (strain APS) (Acyrthosiphon pisum symbiotic bacterium) protein is Transketolase (tkt).